A 167-amino-acid chain; its full sequence is Photosystem I assembly protein Ycf3 (167 aa).

TPR repeat units follow at residues 35-68 (AFAY…EVDA), 72-105 (SYIL…NPSL), and 120-153 (GEQA…APTS).

Belongs to the Ycf3 family.

Its subcellular location is the plastid. The protein localises to the chloroplast thylakoid membrane. Essential for the assembly of the photosystem I (PSI) complex. May act as a chaperone-like factor to guide the assembly of the PSI subunits. This is Photosystem I assembly protein Ycf3 from Chlorokybus atmophyticus (Soil alga).